We begin with the raw amino-acid sequence, 350 residues long: tRNA U34 carboxymethyltransferase (350 aa).

Carboxy-S-adenosyl-L-methionine-binding positions include lysine 101, tryptophan 125, lysine 130, glycine 150, 172-174, 208-209, methionine 224, tyrosine 228, and arginine 343; these read DPS and LE.

The protein belongs to the class I-like SAM-binding methyltransferase superfamily. CmoB family. As to quaternary structure, homotetramer.

The enzyme catalyses carboxy-S-adenosyl-L-methionine + 5-hydroxyuridine(34) in tRNA = 5-carboxymethoxyuridine(34) in tRNA + S-adenosyl-L-homocysteine + H(+). In terms of biological role, catalyzes carboxymethyl transfer from carboxy-S-adenosyl-L-methionine (Cx-SAM) to 5-hydroxyuridine (ho5U) to form 5-carboxymethoxyuridine (cmo5U) at position 34 in tRNAs. The polypeptide is tRNA U34 carboxymethyltransferase (Psychrobacter arcticus (strain DSM 17307 / VKM B-2377 / 273-4)).